The chain runs to 299 residues: DNA-binding transcriptional activator HetR (299 aa).

Residue Ser-152 is part of the active site.

The protein belongs to the peptidase S48 family. As to quaternary structure, homodimer; disulfide-linked.

Its function is as follows. Controls heterocyst differentiation. Dimerization is required for DNA-binding. Has both a protease and a DNA-binding activity. Increased expression leads to more heterocysts than usual. The protein is DNA-binding transcriptional activator HetR of Nostoc punctiforme (strain ATCC 29133 / PCC 73102).